The sequence spans 333 residues: Probable G-protein coupled receptor 174 (333 aa).

Topologically, residues 1–27 (MPANYTCTRPDGDNTDFRYFIYAVTYT) are extracellular. Asn-4 carries an N-linked (GlcNAc...) asparagine glycan. The chain crosses the membrane as a helical span at residues 28 to 48 (VILVPGLIGNILALWVFYGYM). The Cytoplasmic portion of the chain corresponds to 49 to 53 (KETKR). A helical membrane pass occupies residues 54–74 (AVIFMINLAIADLLQVLSLPL). At 75 to 91 (RIFYYLNHDWPFGPGLC) the chain is on the extracellular side. A disulfide bridge connects residues Cys-91 and Cys-168. A helical membrane pass occupies residues 92–112 (MFCFYLKYVNMYASIYFLVCI). The Cytoplasmic portion of the chain corresponds to 113-134 (SVRRFWFLMYPFRFHDCKQKYD). Residues 135 to 155 (LYISIAGWLIICLACVLFPLL) traverse the membrane as a helical segment. Over 156–182 (RTSDDTSGNRTKCFVDLPTRNVNLAQS) the chain is Extracellular. A glycan (N-linked (GlcNAc...) asparagine) is linked at Asn-164. The chain crosses the membrane as a helical span at residues 183–203 (VVMMTIGELIGFVTPLLIVLY). Over 204-231 (CTWKTVLSLQDKYPMAQDLGEKQKALKM) the chain is Cytoplasmic. A helical transmembrane segment spans residues 232–252 (ILTCAGVFLICFAPYHFSFPL). Residues 253-269 (DFLVKSNEIKSCLARRV) lie on the Extracellular side of the membrane. The helical transmembrane segment at 270 to 290 (ILIFHSVALCLASLNSCLDPV) threads the bilayer. The Cytoplasmic portion of the chain corresponds to 291–333 (IYYFSTNEFRRRLSRQDLHDSIQLHAKSFVSNHTASTMTPELC).

Belongs to the G-protein coupled receptor 1 family. Interacts with GNA13. Interacts with CCL21.

Its subcellular location is the cell membrane. Functionally, G-protein-coupled receptor of lysophosphatidylserine (LysoPS) that plays different roles in immune response. Plays a negative role in regulatory T-cell accumulation and homeostasis. Under inflammatory conditions where LysoPS production increases, contributes to the down-regulation of regulatory T-cell activity to favor effector response. Mediates the suppression of IL-2 production in activated T-lymphocytes leading to inhibition of growth, proliferation and differentiation of T-cells. Mechanistically, acts via G(s)-containing heterotrimeric G proteins to trigger elevated cyclic AMP levels and protein kinase A/PKA activity, which may in turn act to antagonize proximal TCR signaling. Plays an important role in the initial period of sepsis through the regulation of macrophage polarization and pro- and anti-inflammatory cytokine secretions. Upon testosterone treatment, acts as a receptor for CCL21 and subsequently triggers through G(q)-alpha and G(12)/G(13) proteins a calcium flux leading to chemotactic effects on activated B-cells. Signals via GNA13 and PKA to promote CD86 up-regulation by follicular B-cells. The protein is Probable G-protein coupled receptor 174 (GPR174) of Homo sapiens (Human).